A 223-amino-acid chain; its full sequence is Phosphoribosylformylglycinamidine synthase subunit PurQ (223 aa).

One can recognise a Glutamine amidotransferase type-1 domain in the interval 3 to 223; that stretch reads FAVLVFPGSN…MVKSWREQHV (221 aa). C85 serves as the catalytic Nucleophile. Catalysis depends on residues H193 and E195.

As to quaternary structure, part of the FGAM synthase complex composed of 1 PurL, 1 PurQ and 2 PurS subunits.

The protein resides in the cytoplasm. It catalyses the reaction N(2)-formyl-N(1)-(5-phospho-beta-D-ribosyl)glycinamide + L-glutamine + ATP + H2O = 2-formamido-N(1)-(5-O-phospho-beta-D-ribosyl)acetamidine + L-glutamate + ADP + phosphate + H(+). The catalysed reaction is L-glutamine + H2O = L-glutamate + NH4(+). It participates in purine metabolism; IMP biosynthesis via de novo pathway; 5-amino-1-(5-phospho-D-ribosyl)imidazole from N(2)-formyl-N(1)-(5-phospho-D-ribosyl)glycinamide: step 1/2. Its function is as follows. Part of the phosphoribosylformylglycinamidine synthase complex involved in the purines biosynthetic pathway. Catalyzes the ATP-dependent conversion of formylglycinamide ribonucleotide (FGAR) and glutamine to yield formylglycinamidine ribonucleotide (FGAM) and glutamate. The FGAM synthase complex is composed of three subunits. PurQ produces an ammonia molecule by converting glutamine to glutamate. PurL transfers the ammonia molecule to FGAR to form FGAM in an ATP-dependent manner. PurS interacts with PurQ and PurL and is thought to assist in the transfer of the ammonia molecule from PurQ to PurL. This Staphylococcus aureus (strain Mu50 / ATCC 700699) protein is Phosphoribosylformylglycinamidine synthase subunit PurQ.